The sequence spans 20 residues: Phosphoglycerate kinase (20 aa).

A disordered region spans residues 1-20; sequence MNKKSIRNVNLKGKRVFDRV.

Belongs to the phosphoglycerate kinase family. In terms of assembly, monomer.

Its subcellular location is the cytoplasm. It carries out the reaction (2R)-3-phosphoglycerate + ATP = (2R)-3-phospho-glyceroyl phosphate + ADP. The protein operates within carbohydrate degradation; glycolysis; pyruvate from D-glyceraldehyde 3-phosphate: step 2/5. This is Phosphoglycerate kinase from Bacillus cereus.